The primary structure comprises 625 residues: Probable potassium transport system protein Kup 2 (625 aa).

12 helical membrane-spanning segments follow: residues 15 to 35 (LSFA…LYAF), 52 to 72 (ILSL…LVIV), 98 to 118 (GGWL…DGML), 134 to 154 (LSPN…FFLF), 164 to 184 (IGVY…ILGF), 212 to 232 (LALF…ALFA), 246 to 266 (WFAV…ALVL), 284 to 304 (FLPV…QAII), 336 to 356 (VYLP…VVIF), 365 to 385 (AYGI…GIIA), 394 to 414 (FKIL…AGNI), and 417 to 437 (LLTG…VMYT).

The protein belongs to the HAK/KUP transporter (TC 2.A.72) family.

The protein resides in the cell inner membrane. The enzyme catalyses K(+)(in) + H(+)(in) = K(+)(out) + H(+)(out). Its function is as follows. Transport of potassium into the cell. Likely operates as a K(+):H(+) symporter. This is Probable potassium transport system protein Kup 2 from Legionella pneumophila (strain Corby).